A 932-amino-acid polypeptide reads, in one-letter code: MPRHHAGGEEGGAAGLWVKSGAAAAAAGGGRLGSGMKDVESGRGRVLLNSAAARGDGLLLLGTRAATLGGGGGGLRESRRGKQGARMSLLGKPLSYTSSQSCRRNVKYRRVQNYLYNVLERPRGWAFIYHAFVFLLVFGCLILSVFSTIPEHTKLASSCLLILEFVMIVVFGLEFIIRIWSAGCCCRYRGWQGRLRFARKPFCVIDTIVLIASIAVVSAKTQGNIFATSALRSLRFLQILRMVRMDRRGGTWKLLGSVVYAHSKELITAWYIGFLVLIFSSFLVYLVEKDANKEFSTYADALWWGTITLTTIGYGDKTPLTWLGRLLSAGFALLGISFFALPAGILGSGFALKVQEQHRQKHFEKRRNPAANLIQCVWRSYAADEKSVSIATWKPHLKALHTCSPTKKEQGEASSSQKLSFKERVRMASPRGQSIKSRQASVGDRRSPSTDITAEGSPTKVQKSWSFNDRTRFRPSLRLKSSQPKPVIDADTALGTDDVYDEKGCQCDVSVEDLTPPLKTVIRAIRIMKFHVAKRKFKETLRPYDVKDVIEQYSAGHLDMLCRIKSLQTRVDQILGKGQITSDKKSREKITAEHETTDDLSMLGRVVKVEKQVQSIESKLDCLLDIYQQVLRKGSASALALASFQIPPFECEQTSDYQSPVDSKDLSGSAQNSGCLSRSTSANISRGLQFILTPNEFSAQTFYALSPTMHSQATQVPISQSDGSAVAATNTIANQINTAPKPAAPTTLQIPPPLPAIKHLPRPETLHPNPAGLQESISDVTTCLVASKENVQVAQSNLTKDRSMRKSFDMGGETLLSVCPMVPKDLGKSLSVQNLIRSTEELNIQLSGSESSGSRGSQDFYPKWRESKLFITDEEVGPEETETDTFDAAPQPAREAAFASDSLRTGRSRSSQSICKAGESTDALSLPHVKLK.

At 1-125 (MPRHHAGGEE…YNVLERPRGW (125 aa)) the chain is on the cytoplasmic side. Ser-88 is modified (phosphoserine). Residues 126–146 (AFIYHAFVFLLVFGCLILSVF) form a helical membrane-spanning segment. Residues 147-156 (STIPEHTKLA) are Extracellular-facing. The chain crosses the membrane as a helical span at residues 157 to 177 (SSCLLILEFVMIVVFGLEFII). The Cytoplasmic segment spans residues 178-200 (RIWSAGCCCRYRGWQGRLRFARK). Residues 201–221 (PFCVIDTIVLIASIAVVSAKT) traverse the membrane as a helical segment. Residues 222–229 (QGNIFATS) lie on the Extracellular side of the membrane. A helical; Voltage-sensor transmembrane segment spans residues 230–252 (ALRSLRFLQILRMVRMDRRGGTW). Residues Arg-248 and Lys-264 each contribute to the a 1,2-diacyl-sn-glycero-3-phospho-(1D-myo-inositol-4,5-bisphosphate) site. Residues 253-266 (KLLGSVVYAHSKEL) are Cytoplasmic-facing. A helical transmembrane segment spans residues 267 to 287 (ITAWYIGFLVLIFSSFLVYLV). Residues 288–298 (EKDANKEFSTY) are Extracellular-facing. Residues 299–319 (ADALWWGTITLTTIGYGDKTP) constitute an intramembrane region (pore-forming). The Extracellular segment spans residues 320–325 (LTWLGR). The chain crosses the membrane as a helical span at residues 326–346 (LLSAGFALLGISFFALPAGIL). Topologically, residues 347–932 (GSGFALKVQE…ALSLPHVKLK (586 aa)) are cytoplasmic. Lys-361 is an a 1,2-diacyl-sn-glycero-3-phospho-(1D-myo-inositol-4,5-bisphosphate) binding site. The interval 370 to 378 (AANLIQCVW) is interaction with CALM. The interval 404–465 (SPTKKEQGEA…GSPTKVQKSW (62 aa)) is disordered. A compositionally biased stretch (polar residues) spans 431-440 (RGQSIKSRQA). A Phosphoserine modification is found at Ser-447. The interaction with CALM stretch occupies residues 521 to 528 (VIRAIRIM). The tract at residues 655 to 678 (SDYQSPVDSKDLSGSAQNSGCLSR) is disordered. Ser-831 carries the post-translational modification Phosphoserine. The segment covering 876–885 (VGPEETETDT) has biased composition (acidic residues). Residues 876–919 (VGPEETETDTFDAAPQPAREAAFASDSLRTGRSRSSQSICKAGE) are disordered. Low complexity predominate over residues 888 to 899 (AAPQPAREAAFA). Positions 902–914 (SLRTGRSRSSQSI) are enriched in polar residues.

This sequence belongs to the potassium channel family. KQT (TC 1.A.1.15) subfamily. Kv7.5/KCNQ5 sub-subfamily. Homotetramer; forms a functional homotetrameric channel resulting in the expression of a small M-current. Heterotetramer with KCNQ3; forms heterotetrameric M-channel responsible for the native M-current. Heterotetramer with KCNQ1; forms a functional voltage-gated potassium channel. Interacts (via C-terminus) with calmodulin/CALM1; forms a heterooctameric structure (with 4:4 KCNQ1:CALM stoichiometry); the interaction is calcium-independent, constitutive and participates in the channel function. In terms of tissue distribution, strongly expressed in brain and skeletal muscle. In brain, expressed in cerebral cortex, occipital pole, frontal lobe and temporal lobe. Lower levels in hippocampus and putamen. Low to undetectable levels in medulla, cerebellum and thalamus.

The protein localises to the cell membrane. The enzyme catalyses K(+)(in) = K(+)(out). Phosphatidylinositol-4,5-bisphosphate (PIP2) is essential to activate KCNQ5 channel by inducing the coupling of the voltage-sensing domain (VSD) and the pore-forming domain (PD). Calcium suppresses KCNQ5 channel current through calcium-bound CALM C-terminus. Therefore CALM acts as calcium sensor that controls channel activity. Activated by niflumic acid and the anticonvulsant retigabine. Inhibited by barium, linopirdine, XE991 and tetraethylammonium (as homomer). Insensitive to tetraethylammonium in KCNQ3-KCNQ5 heteromers. Functionally, pore-forming subunit of the voltage-gated potassium (Kv) channel broadly expressed in brain and involved in the regulation of neuronal excitability. Associates with KCNQ3/Kv7.3 pore-forming subunit to form a potassium channel which contributes to M-type current, a slowly activating and deactivating potassium conductance which plays a critical role in determining the subthreshold electrical excitability of neurons. Contributes, with other potassium channels, to the molecular diversity of a heterogeneous population of M-channels, varying in kinetic and pharmacological properties, which underlie this physiologically important current. Also forms a functional channel with KCNQ1/Kv7.1 subunit that may contribute to vasoconstriction and hypertension. Channel may be selectively permeable in vitro to other cations besides potassium, in decreasing order of affinity K(+) = Rb(+) &gt; Cs(+) &gt; Na(+). Similar to the native M-channel, KCNQ3-KCNQ5 potassium channel is suppressed by activation of the muscarinic acetylcholine receptor CHRM1. This chain is Potassium voltage-gated channel subfamily KQT member 5, found in Homo sapiens (Human).